We begin with the raw amino-acid sequence, 179 residues long: ATP synthase subunit delta (179 aa).

This sequence belongs to the ATPase delta chain family. In terms of assembly, F-type ATPases have 2 components, F(1) - the catalytic core - and F(0) - the membrane proton channel. F(1) has five subunits: alpha(3), beta(3), gamma(1), delta(1), epsilon(1). F(0) has three main subunits: a(1), b(2) and c(10-14). The alpha and beta chains form an alternating ring which encloses part of the gamma chain. F(1) is attached to F(0) by a central stalk formed by the gamma and epsilon chains, while a peripheral stalk is formed by the delta and b chains.

The protein localises to the cell membrane. In terms of biological role, f(1)F(0) ATP synthase produces ATP from ADP in the presence of a proton or sodium gradient. F-type ATPases consist of two structural domains, F(1) containing the extramembraneous catalytic core and F(0) containing the membrane proton channel, linked together by a central stalk and a peripheral stalk. During catalysis, ATP synthesis in the catalytic domain of F(1) is coupled via a rotary mechanism of the central stalk subunits to proton translocation. Functionally, this protein is part of the stalk that links CF(0) to CF(1). It either transmits conformational changes from CF(0) to CF(1) or is implicated in proton conduction. The protein is ATP synthase subunit delta of Clostridium perfringens (strain SM101 / Type A).